A 224-amino-acid polypeptide reads, in one-letter code: Small ribosomal subunit protein eS1 (224 aa).

The protein belongs to the eukaryotic ribosomal protein eS1 family.

This chain is Small ribosomal subunit protein eS1, found in Methanococcus maripaludis (strain C7 / ATCC BAA-1331).